We begin with the raw amino-acid sequence, 349 residues long: Flagellar P-ring protein (349 aa).

Residues 1 to 20 (MSKAIKILLPLLLFSLSLQA) form the signal peptide.

This sequence belongs to the FlgI family. In terms of assembly, the basal body constitutes a major portion of the flagellar organelle and consists of four rings (L,P,S, and M) mounted on a central rod.

The protein resides in the periplasm. It is found in the bacterial flagellum basal body. In terms of biological role, assembles around the rod to form the L-ring and probably protects the motor/basal body from shearing forces during rotation. The sequence is that of Flagellar P-ring protein from Wolinella succinogenes (strain ATCC 29543 / DSM 1740 / CCUG 13145 / JCM 31913 / LMG 7466 / NCTC 11488 / FDC 602W) (Vibrio succinogenes).